Here is a 361-residue protein sequence, read N- to C-terminus: Chorismate synthase (361 aa).

2 residues coordinate NADP(+): arginine 48 and arginine 54. Residues 125–127 (RSS), 238–239 (NA), glycine 278, 293–297 (KPTSS), and arginine 319 contribute to the FMN site.

The protein belongs to the chorismate synthase family. As to quaternary structure, homotetramer. FMNH2 is required as a cofactor.

The catalysed reaction is 5-O-(1-carboxyvinyl)-3-phosphoshikimate = chorismate + phosphate. It functions in the pathway metabolic intermediate biosynthesis; chorismate biosynthesis; chorismate from D-erythrose 4-phosphate and phosphoenolpyruvate: step 7/7. Catalyzes the anti-1,4-elimination of the C-3 phosphate and the C-6 proR hydrogen from 5-enolpyruvylshikimate-3-phosphate (EPSP) to yield chorismate, which is the branch point compound that serves as the starting substrate for the three terminal pathways of aromatic amino acid biosynthesis. This reaction introduces a second double bond into the aromatic ring system. The sequence is that of Chorismate synthase from Shigella boydii serotype 18 (strain CDC 3083-94 / BS512).